We begin with the raw amino-acid sequence, 57 residues long: UPF0391 membrane protein NE0130 (57 aa).

A run of 2 helical transmembrane segments spans residues 1-21 (MLKWAIIFAIISFISGVFGFR) and 33-53 (FLFFLFALITLVLLVLGLLGI).

It belongs to the UPF0391 family.

It localises to the cell membrane. The sequence is that of UPF0391 membrane protein NE0130 from Nitrosomonas europaea (strain ATCC 19718 / CIP 103999 / KCTC 2705 / NBRC 14298).